The chain runs to 776 residues: Photosystem I P700 chlorophyll a apoprotein A1 (776 aa).

The next 8 membrane-spanning stretches (helical) occupy residues 76–99 (IFSAHFGHLAIVFIWMSGAFFHGA), 162–185 (LMALATGALIMAALVLHGGIFHYH), 201–225 (LQHHQIGLFGLGSLGWTGHLIHVAN), 309–327 (VAHHHLAWAVFLMFGGHVY), 368–391 (WHAQLAVNLACIGSGSIVVAHHMY), 407–433 (LGLFTHHMWIGGLMICGAAAHAGIAVI), 455–477 (AIISHLNWVCMFLGFHSFGLYIH), and 557–575 (LMIHHIHAFTIHVTCLILL). Residues Cys599 and Cys608 each contribute to the [4Fe-4S] cluster site. 2 helical membrane-spanning segments follow: residues 615-636 (HVFLGLFWMYNSLSMVIFYFSW) and 690-712 (LSGYGLLFLGGHFVWAFSLMFLF). A divinylchlorophyll a'-binding site is contributed by His701. Divinyl chlorophyll a contacts are provided by Met709 and Tyr717. Phylloquinone is bound at residue Trp718. The chain crosses the membrane as a helical span at residues 750 to 770 (AVGVTHFLFGGIVTTWAFFHA).

The protein belongs to the PsaA/PsaB family. In terms of assembly, the PsaA/B heterodimer binds the P700 chlorophyll special pair and subsequent electron acceptors. PSI consists of a core antenna complex that captures photons, and an electron transfer chain that converts photonic excitation into a charge separation. The cyanobacterial PSI reaction center is composed of one copy each of PsaA,B,C,D,E,F,I,J,K,L,M and X, and forms trimeric complexes. It depends on PSI electron transfer chain: 5 divinyl chlorophyll a, 1 divinyl chlorophyll a', 2 phylloquinones and 3 4Fe-4S clusters. PSI core antenna: 90 divinyl chlorophyll a, 22 carotenoids, 3 phospholipids and 1 galactolipid. P700 is a divinyl chlorophyll a/divinyl chlorophyll a' dimer, A0 is one or more chlorophyll divinyl a, A1 is one or both phylloquinones and FX is a shared 4Fe-4S iron-sulfur center. as a cofactor.

It localises to the cellular thylakoid membrane. The catalysed reaction is reduced [plastocyanin] + hnu + oxidized [2Fe-2S]-[ferredoxin] = oxidized [plastocyanin] + reduced [2Fe-2S]-[ferredoxin]. PsaA and PsaB bind P700, the primary electron donor of photosystem I (PSI), as well as the electron acceptors A0, A1 and FX. PSI is a plastocyanin/cytochrome c6-ferredoxin oxidoreductase, converting photonic excitation into a charge separation, which transfers an electron from the donor P700 chlorophyll pair to the spectroscopically characterized acceptors A0, A1, FX, FA and FB in turn. Oxidized P700 is reduced on the lumenal side of the thylakoid membrane by plastocyanin or cytochrome c6. In Prochlorococcus marinus (strain MIT 9313), this protein is Photosystem I P700 chlorophyll a apoprotein A1.